The chain runs to 515 residues: Na(+)/H(+) antiporter NhaB (515 aa).

11 helical membrane passes run 23-43, 45-65, 96-116, 136-156, 204-224, 245-265, 305-325, 349-369, 393-413, 449-469, and 480-500; these read LAIIIFLIINPLIFFFINPFV, GWLLVIEFIFTLAMALKCYPL, VVLLLIFMVAGIYFMKQLLLF, CLASAFLSAFLDALTVIAVVI, LMMHAGVGTALGGVMTMVGEP, APITLPVFICGLLVCFLVEHF, ALIGIWLIVALAFHLAEVGLI, FEEALPFTALLTVFFSIVAVI, LFYLFNGLLSSVSDNVFVGTV, ATPNGQAAFLFLLTSTLSPLI, and ALPYTIVMTLVGLLCVEFLLI.

The protein belongs to the NhaB Na(+)/H(+) (TC 2.A.34) antiporter family.

Its subcellular location is the cell inner membrane. The catalysed reaction is 2 Na(+)(in) + 3 H(+)(out) = 2 Na(+)(out) + 3 H(+)(in). In terms of biological role, na(+)/H(+) antiporter that extrudes sodium in exchange for external protons. This is Na(+)/H(+) antiporter NhaB from Photorhabdus laumondii subsp. laumondii (strain DSM 15139 / CIP 105565 / TT01) (Photorhabdus luminescens subsp. laumondii).